Reading from the N-terminus, the 356-residue chain is MLFLAPGYIFPHVATPVTVAIDFAQAVKEGAYSFLDLKASPVPNPELFQPPSRVSIGMTGGREERNEEIIRGPLNYLLSLPGKDIRGKLIDALNEWFRVPEDKLSTIKEIIVILHTASLLIDDIQDSSQLRRGNPVAHRIFGVAQTINSANYAYFLAQAKLADLNDSRAFDIFTKGLLKLHRGQGMELYWRDNLICPTEEEYVEMVSCKTGGLFYLAVQLMQLNSEVTVNFSSFINLLGIIFQIRDDYMNLQSGTMTKTKGFSEDLTEGKFGYPIIHSIHAAPNDQQLIQILKLKTNDEVIKQYAVRYIESTGSFIYCREKLDLYLQEANETFQGLELLLGPSKGIRAILNFLRTR.

Isopentenyl diphosphate is bound by residues lysine 83, arginine 86, and histidine 115. Mg(2+) is bound by residues aspartate 122 and aspartate 126. Arginine 131 contributes to the dimethylallyl diphosphate binding site. Arginine 132 is a binding site for isopentenyl diphosphate. Residues lysine 209, threonine 210, and glutamine 243 each contribute to the dimethylallyl diphosphate site. Aspartate 246 contacts Mg(2+). Dimethylallyl diphosphate is bound by residues asparagine 250, lysine 260, and lysine 270.

Belongs to the FPP/GGPP synthase family. It depends on Mg(2+) as a cofactor.

The catalysed reaction is isopentenyl diphosphate + dimethylallyl diphosphate = (2E)-geranyl diphosphate + diphosphate. It carries out the reaction isopentenyl diphosphate + (2E)-geranyl diphosphate = (2E,6E)-farnesyl diphosphate + diphosphate. It catalyses the reaction isopentenyl diphosphate + (2E,6E)-farnesyl diphosphate = (2E,6E,10E)-geranylgeranyl diphosphate + diphosphate. Its pathway is secondary metabolite biosynthesis. Geranylgeranyl pyrophosphate synthase; part of the gene cluster that mediates the biosynthesis of the indole diterpenes penitrems. The geranylgeranyl diphosphate (GGPP) synthase ptmG catalyzes the first step in penitrem biosynthesis via conversion of farnesyl pyrophosphate and isopentyl pyrophosphate into geranylgeranyl pyrophosphate (GGPP). Condensation of indole-3-glycerol phosphate with GGPP by the prenyl transferase ptmC then forms 3-geranylgeranylindole (3-GGI). Epoxidation by the FAD-dependent monooxygenase ptmM leads to a epoxidized-GGI that is substrate of the terpene cyclase ptmB for cyclization to yield paspaline. Paspaline is subsequently converted to 13-desoxypaxilline by the cytochrome P450 monooxygenase ptmP, the latter being then converted to paxilline by the cytochrome P450 monooxygenase ptmQ. Paxilline is converted to beta-paxitriol via C-10 ketoreduction by the short-chain dehydrogenase ptmH which can be monoprenylated at the C-20 by the indole diterpene prenyltransferase ptmD. A two-step elimination (acetylation and elimination) process performed by the O-acetyltransferase ptmV and ptmI leads to the production of the prenylated form of penijanthine. The FAD-linked oxidoreductase ptmO then converts the prenylated form of penijanthine into PC-M5 which is in turn transformed into PC-M4 by the aromatic dimethylallyltransferase ptmE. Five sequential oxidative transformations performed by the cytochrome P450 monooxygenases ptmK, ptmU, ptmL, ptmN and ptmJ yield the various penitrem compounds. PtmK, ptmU and ptmM are involved in the formation of the key bicyclic ring of penitrem C via the formation of the intermediates secopenitrem D and penitrem D. PtmL catalyzes the epoxidation of penitrem D and C to yield penitrem B and F, respectively. PtmJ catalyzes the last benzylic hydroxylation to convert penitrem B to prenitrem E and penitrem F to penitrem A. This is Geranylgeranyl pyrophosphate synthase penG from Penicillium ochrochloron.